We begin with the raw amino-acid sequence, 309 residues long: HPr kinase/phosphorylase (309 aa).

Catalysis depends on residues His-139 and Lys-160. Position 154 to 161 (154 to 161 (GESGIGKS)) interacts with ATP. Mg(2+) is bound at residue Ser-161. Asp-178 functions as the Proton acceptor; for phosphorylation activity. Proton donor; for dephosphorylation activity in the catalytic mechanism. The interval 202–211 (IELRGIGIID) is important for the catalytic mechanism of both phosphorylation and dephosphorylation. A Mg(2+)-binding site is contributed by Glu-203. Residue Arg-244 is part of the active site. The interval 265-270 (PIRPGR) is important for the catalytic mechanism of dephosphorylation.

This sequence belongs to the HPrK/P family. In terms of assembly, homohexamer. Mg(2+) is required as a cofactor.

It catalyses the reaction [HPr protein]-L-serine + ATP = [HPr protein]-O-phospho-L-serine + ADP + H(+). The catalysed reaction is [HPr protein]-O-phospho-L-serine + phosphate + H(+) = [HPr protein]-L-serine + diphosphate. Functionally, catalyzes the ATP- as well as the pyrophosphate-dependent phosphorylation of a specific serine residue in HPr, a phosphocarrier protein of the phosphoenolpyruvate-dependent sugar phosphotransferase system (PTS). HprK/P also catalyzes the pyrophosphate-producing, inorganic phosphate-dependent dephosphorylation (phosphorolysis) of seryl-phosphorylated HPr (P-Ser-HPr). The two antagonistic activities of HprK/P are regulated by several intracellular metabolites, which change their concentration in response to the absence or presence of rapidly metabolisable carbon sources (glucose, fructose, etc.) in the growth medium. Therefore, by controlling the phosphorylation state of HPr, HPrK/P is a sensor enzyme that plays a major role in the regulation of carbon metabolism and sugar transport: it mediates carbon catabolite repression (CCR), and regulates PTS-catalyzed carbohydrate uptake and inducer exclusion. In Lachnoclostridium phytofermentans (strain ATCC 700394 / DSM 18823 / ISDg) (Clostridium phytofermentans), this protein is HPr kinase/phosphorylase.